The following is a 345-amino-acid chain: Beta-hexosaminidase (345 aa).

Residues D60, R68, R132, and 162-163 each bind substrate; that span reads KH. H175 (proton donor/acceptor) is an active-site residue. D247 acts as the Nucleophile in catalysis.

Belongs to the glycosyl hydrolase 3 family. NagZ subfamily.

Its subcellular location is the cytoplasm. The catalysed reaction is Hydrolysis of terminal non-reducing N-acetyl-D-hexosamine residues in N-acetyl-beta-D-hexosaminides.. Its pathway is cell wall biogenesis; peptidoglycan recycling. Plays a role in peptidoglycan recycling by cleaving the terminal beta-1,4-linked N-acetylglucosamine (GlcNAc) from peptide-linked peptidoglycan fragments, giving rise to free GlcNAc, anhydro-N-acetylmuramic acid and anhydro-N-acetylmuramic acid-linked peptides. The chain is Beta-hexosaminidase from Actinobacillus pleuropneumoniae serotype 3 (strain JL03).